Reading from the N-terminus, the 193-residue chain is Large ribosomal subunit protein uL5 (193 aa).

This sequence belongs to the universal ribosomal protein uL5 family. Part of the 50S ribosomal subunit; part of the 5S rRNA/L5/L18/L25 subcomplex. Contacts the 5S rRNA and the P site tRNA. Forms a bridge to the 30S subunit in the 70S ribosome.

In terms of biological role, this is one of the proteins that bind and probably mediate the attachment of the 5S RNA into the large ribosomal subunit, where it forms part of the central protuberance. In the 70S ribosome it contacts protein S13 of the 30S subunit (bridge B1b), connecting the 2 subunits; this bridge is implicated in subunit movement. Contacts the P site tRNA; the 5S rRNA and some of its associated proteins might help stabilize positioning of ribosome-bound tRNAs. This is Large ribosomal subunit protein uL5 from Pseudarthrobacter chlorophenolicus (strain ATCC 700700 / DSM 12829 / CIP 107037 / JCM 12360 / KCTC 9906 / NCIMB 13794 / A6) (Arthrobacter chlorophenolicus).